Here is a 396-residue protein sequence, read N- to C-terminus: Elongation factor Tu (396 aa).

Positions 10 to 206 (KPHVNVGTIG…ALDTYIPTPE (197 aa)) constitute a tr-type G domain. Residues 19 to 26 (GHVDHGKT) form a G1 region. 19–26 (GHVDHGKT) lines the GTP pocket. T26 serves as a coordination point for Mg(2+). A G2 region spans residues 60–64 (GITIN). The tract at residues 81–84 (DCPG) is G3. GTP contacts are provided by residues 81–85 (DCPGH) and 136–139 (NKCD). Positions 136 to 139 (NKCD) are G4. The G5 stretch occupies residues 174–176 (SAK).

Belongs to the TRAFAC class translation factor GTPase superfamily. Classic translation factor GTPase family. EF-Tu/EF-1A subfamily. In terms of assembly, monomer.

It localises to the cytoplasm. The catalysed reaction is GTP + H2O = GDP + phosphate + H(+). Its function is as follows. GTP hydrolase that promotes the GTP-dependent binding of aminoacyl-tRNA to the A-site of ribosomes during protein biosynthesis. The protein is Elongation factor Tu of Thiomonas delicata (Thiomonas cuprina).